Here is a 476-residue protein sequence, read N- to C-terminus: Bifunctional protein HldE (476 aa).

The ribokinase stretch occupies residues 1 to 319; that stretch reads MKVSLPAFEK…EALALHHGES (319 aa). 195–198 is a binding site for ATP; that stretch reads NMSE. Residue Asp264 is part of the active site. The segment at 345–476 is cytidylyltransferase; sequence MTNGCFDILH…AIIQNIMAKQ (132 aa).

In the N-terminal section; belongs to the carbohydrate kinase PfkB family. This sequence in the C-terminal section; belongs to the cytidylyltransferase family. Homodimer.

It catalyses the reaction D-glycero-beta-D-manno-heptose 7-phosphate + ATP = D-glycero-beta-D-manno-heptose 1,7-bisphosphate + ADP + H(+). The catalysed reaction is D-glycero-beta-D-manno-heptose 1-phosphate + ATP + H(+) = ADP-D-glycero-beta-D-manno-heptose + diphosphate. The protein operates within nucleotide-sugar biosynthesis; ADP-L-glycero-beta-D-manno-heptose biosynthesis; ADP-L-glycero-beta-D-manno-heptose from D-glycero-beta-D-manno-heptose 7-phosphate: step 1/4. Its pathway is nucleotide-sugar biosynthesis; ADP-L-glycero-beta-D-manno-heptose biosynthesis; ADP-L-glycero-beta-D-manno-heptose from D-glycero-beta-D-manno-heptose 7-phosphate: step 3/4. Functionally, catalyzes the phosphorylation of D-glycero-D-manno-heptose 7-phosphate at the C-1 position to selectively form D-glycero-beta-D-manno-heptose-1,7-bisphosphate. In terms of biological role, catalyzes the ADP transfer from ATP to D-glycero-beta-D-manno-heptose 1-phosphate, yielding ADP-D-glycero-beta-D-manno-heptose. The protein is Bifunctional protein HldE of Shewanella sp. (strain MR-4).